The chain runs to 230 residues: uncharacterized protein (230 aa).

Residues 118–195 (LLDEILPKEP…SKREMERLER (78 aa)) are disordered. A compositionally biased stretch (basic residues) spans 136-146 (QKKKEKRAALK). Basic and acidic residues-rich tracts occupy residues 160-170 (ETDLYGDRDSF) and 179-195 (QRSEFRASKREMERLER).

This is an uncharacterized protein from Schizosaccharomyces pombe (strain 972 / ATCC 24843) (Fission yeast).